The primary structure comprises 219 residues: MPAKKRTRKTVKKTVSFSDDTTLTTHQNREKKNVDHDRPPVYVRKTPLMTFPYHLVALLYYYVFVSSNFNTVKLLSFLIPTQVAYLVLQFNKCTVYGNKIIKINYSLTIICLGVTFLLSFPTMLLTILFGAPLMDLLWETWLLSLHFAFLAYPAVYSVFNCDFKVGLWKKYFIFIVVGGWISCVVIPLDWDRDWQNWPIPIVVGGYLGALVGYTIGAYI.

The Cytoplasmic segment spans residues 1 to 45; the sequence is MPAKKRTRKTVKKTVSFSDDTTLTTHQNREKKNVDHDRPPVYVRK. Phosphoserine is present on S16. The helical transmembrane segment at 46-66 threads the bilayer; that stretch reads TPLMTFPYHLVALLYYYVFVS. Residue S67 is a topological domain, lumenal. The helical transmembrane segment at 68–88 threads the bilayer; it reads NFNTVKLLSFLIPTQVAYLVL. Residues 89–108 lie on the Cytoplasmic side of the membrane; that stretch reads QFNKCTVYGNKIIKINYSLT. A helical transmembrane segment spans residues 109–129; that stretch reads IICLGVTFLLSFPTMLLTILF. The Lumenal segment spans residues 130–135; that stretch reads GAPLMD. Residues 136–156 form a helical membrane-spanning segment; the sequence is LLWETWLLSLHFAFLAYPAVY. Residues 157–170 are Cytoplasmic-facing; the sequence is SVFNCDFKVGLWKK. A helical membrane pass occupies residues 171–191; the sequence is YFIFIVVGGWISCVVIPLDWD. Residues 192 to 198 lie on the Lumenal side of the membrane; that stretch reads RDWQNWP. A helical membrane pass occupies residues 199–217; the sequence is IPIVVGGYLGALVGYTIGA. Over 218 to 219 the chain is Cytoplasmic; sequence YI.

The protein belongs to the PIGF family.

It is found in the endoplasmic reticulum membrane. The protein operates within glycolipid biosynthesis; glycosylphosphatidylinositol-anchor biosynthesis. Acts in the GPI biosynthetic pathway between GlcNAc-PI synthesis and GPI transfer to protein. Required for the formation of complete GPI precursors CP1 and CP2. This chain is Glycosylphosphatidylinositol anchor biosynthesis protein 11 (GPI11), found in Saccharomyces cerevisiae (strain ATCC 204508 / S288c) (Baker's yeast).